The primary structure comprises 206 residues: Small ribosomal subunit protein uS4 (206 aa).

Positions Q96 to I156 constitute an S4 RNA-binding domain.

This sequence belongs to the universal ribosomal protein uS4 family. Part of the 30S ribosomal subunit. Contacts protein S5. The interaction surface between S4 and S5 is involved in control of translational fidelity.

One of the primary rRNA binding proteins, it binds directly to 16S rRNA where it nucleates assembly of the body of the 30S subunit. Functionally, with S5 and S12 plays an important role in translational accuracy. This is Small ribosomal subunit protein uS4 from Pseudoalteromonas translucida (strain TAC 125).